The following is a 502-amino-acid chain: Ribose import ATP-binding protein RbsA (502 aa).

ABC transporter domains are found at residues 3-239 (VTMR…VGRE) and 249-493 (AAPG…TGGA). 35–42 (GENGAGKS) lines the ATP pocket.

It belongs to the ABC transporter superfamily. Ribose importer (TC 3.A.1.2.1) family. The complex is composed of an ATP-binding protein (RbsA), two transmembrane proteins (RbsC) and a solute-binding protein (RbsB).

The protein resides in the cell inner membrane. The catalysed reaction is D-ribose(out) + ATP + H2O = D-ribose(in) + ADP + phosphate + H(+). In terms of biological role, part of the ABC transporter complex RbsABC involved in ribose import. Responsible for energy coupling to the transport system. This chain is Ribose import ATP-binding protein RbsA, found in Chromobacterium violaceum (strain ATCC 12472 / DSM 30191 / JCM 1249 / CCUG 213 / NBRC 12614 / NCIMB 9131 / NCTC 9757 / MK).